The chain runs to 449 residues: Protein phosphatase fem-2 (449 aa).

An interaction with fem-1 and fem-3 region spans residues 28-34; that stretch reads EEAFADE. Residues 54–56 form an interaction with fem-3 region; sequence IRF. One can recognise a PPM-type phosphatase domain in the interval 160–424; it reads GIHVSGDQLK…DNVSVVIGFL (265 aa). The Mg(2+) site is built by Asp202, Gly203, Asp370, and Asp415.

The protein belongs to the PP2C family. As to quaternary structure, component of a complex containing fem-1, fem-2 and fem-3. Interacts (via N-terminus) with fem-1 and fem-3. Component of the CBC(fem-1) E3 ubiquitin-protein ligase complex, at least composed of cul-2, elc-1, tra-1, fem-1, fem-2 and fem-3; mediates the ubiquitination and subsequent proteasomal degradation of tra-1. Interacts with tra-1. Interacts with sel-10. Mg(2+) serves as cofactor. The cofactor is Mn(2+).

The catalysed reaction is O-phospho-L-seryl-[protein] + H2O = L-seryl-[protein] + phosphate. The enzyme catalyses O-phospho-L-threonyl-[protein] + H2O = L-threonyl-[protein] + phosphate. Its function is as follows. Dephosphorylates auto-phosphorylated Ca(2+)/calmodulin-dependent protein kinase unc-43/CAMKII in vitro. Involved in the regulation of sex determination. Together with fem-3, required for male sexual development by promoting the proteasomal-mediated degradation of tra-1, a transcription repressor of male-specific genes. Promotes apoptosis. In Caenorhabditis elegans, this protein is Protein phosphatase fem-2.